The chain runs to 182 residues: Endoribonuclease YbeY (182 aa).

Zn(2+) contacts are provided by His-115, His-119, and His-125.

Belongs to the endoribonuclease YbeY family. Zn(2+) serves as cofactor.

It localises to the cytoplasm. Single strand-specific metallo-endoribonuclease involved in late-stage 70S ribosome quality control and in maturation of the 3' terminus of the 16S rRNA. This Bifidobacterium longum (strain NCC 2705) protein is Endoribonuclease YbeY.